A 208-amino-acid chain; its full sequence is Imidazole glycerol phosphate synthase subunit HisH (208 aa).

The region spanning 1-206 is the Glutamine amidotransferase type-1 domain; it reads MFAIVDYDTG…KEMVSANDFS (206 aa). Cys-79 (nucleophile) is an active-site residue. Residues His-181 and Glu-183 contribute to the active site.

In terms of assembly, heterodimer of HisH and HisF.

Its subcellular location is the cytoplasm. The catalysed reaction is 5-[(5-phospho-1-deoxy-D-ribulos-1-ylimino)methylamino]-1-(5-phospho-beta-D-ribosyl)imidazole-4-carboxamide + L-glutamine = D-erythro-1-(imidazol-4-yl)glycerol 3-phosphate + 5-amino-1-(5-phospho-beta-D-ribosyl)imidazole-4-carboxamide + L-glutamate + H(+). The enzyme catalyses L-glutamine + H2O = L-glutamate + NH4(+). The protein operates within amino-acid biosynthesis; L-histidine biosynthesis; L-histidine from 5-phospho-alpha-D-ribose 1-diphosphate: step 5/9. Functionally, IGPS catalyzes the conversion of PRFAR and glutamine to IGP, AICAR and glutamate. The HisH subunit catalyzes the hydrolysis of glutamine to glutamate and ammonia as part of the synthesis of IGP and AICAR. The resulting ammonia molecule is channeled to the active site of HisF. The protein is Imidazole glycerol phosphate synthase subunit HisH of Lactiplantibacillus plantarum (strain ATCC BAA-793 / NCIMB 8826 / WCFS1) (Lactobacillus plantarum).